The sequence spans 214 residues: Protein DMP6 (214 aa).

4 helical membrane passes run Leu52 to Thr72, Phe83 to Asp103, Phe143 to Asp163, and Val178 to Ala198.

Belongs to the plant DMP1 protein family. Expressed constitutively in leaves, stems, flowers, siliques and roots (e.g. root hairs).

The protein localises to the vacuole membrane. In terms of biological role, involved in membrane remodeling. This Arabidopsis thaliana (Mouse-ear cress) protein is Protein DMP6.